The primary structure comprises 535 residues: T-complex protein 1 subunit epsilon (535 aa).

This sequence belongs to the TCP-1 chaperonin family. Heterooligomeric complex of about 850 to 900 kDa that forms two stacked rings, 12 to 16 nm in diameter.

The protein localises to the cytoplasm. Functionally, molecular chaperone; assists the folding of proteins upon ATP hydrolysis. Known to play a role, in vitro, in the folding of actin and tubulin. This is T-complex protein 1 subunit epsilon from Arabidopsis thaliana (Mouse-ear cress).